We begin with the raw amino-acid sequence, 281 residues long: Bifunctional protein FolD (281 aa).

Residues 159–161 (NRS), S184, and I225 contribute to the NADP(+) site.

The protein belongs to the tetrahydrofolate dehydrogenase/cyclohydrolase family. In terms of assembly, homodimer.

It catalyses the reaction (6R)-5,10-methylene-5,6,7,8-tetrahydrofolate + NADP(+) = (6R)-5,10-methenyltetrahydrofolate + NADPH. The catalysed reaction is (6R)-5,10-methenyltetrahydrofolate + H2O = (6R)-10-formyltetrahydrofolate + H(+). It functions in the pathway one-carbon metabolism; tetrahydrofolate interconversion. Functionally, catalyzes the oxidation of 5,10-methylenetetrahydrofolate to 5,10-methenyltetrahydrofolate and then the hydrolysis of 5,10-methenyltetrahydrofolate to 10-formyltetrahydrofolate. This Thermoplasma volcanium (strain ATCC 51530 / DSM 4299 / JCM 9571 / NBRC 15438 / GSS1) protein is Bifunctional protein FolD.